The sequence spans 314 residues: MSRPRRRGRDIHGVLLLDKPQGLSSNDALQKVKRLYNANRAGHTGALDPLATGMLPICLGEATKFSQFLLDSDKRYRVIARLGQRTDTSDADGQIVQERPVSFTQAQLDAALDSFRGDIKQVPSMYSALKYQGKKLYEYARQGIEVPREARSITVYELQFIRWEGDELELEIHCSKGTYIRTITDDLGELLGCGAHVIYLRRLQVATYPTERMVTLEQLNELLEQAHRQEIAPAELLDPLLMPMDSPVENYPEVNLLPVVAGYVKQGQPVQVAGAPASGMVRITEGEERKFIGVGDIADDGRVAPRRLVVEYFD.

Histidine 43 contacts substrate. The active-site Nucleophile is the aspartate 48. Residues tyrosine 76, tyrosine 179, and leucine 200 each coordinate substrate.

It belongs to the pseudouridine synthase TruB family. Type 1 subfamily.

The catalysed reaction is uridine(55) in tRNA = pseudouridine(55) in tRNA. In terms of biological role, responsible for synthesis of pseudouridine from uracil-55 in the psi GC loop of transfer RNAs. The sequence is that of tRNA pseudouridine synthase B from Serratia proteamaculans (strain 568).